Here is a 118-residue protein sequence, read N- to C-terminus: Large ribosomal subunit protein bL20 (118 aa).

The protein belongs to the bacterial ribosomal protein bL20 family.

Its function is as follows. Binds directly to 23S ribosomal RNA and is necessary for the in vitro assembly process of the 50S ribosomal subunit. It is not involved in the protein synthesizing functions of that subunit. This is Large ribosomal subunit protein bL20 from Caldicellulosiruptor saccharolyticus (strain ATCC 43494 / DSM 8903 / Tp8T 6331).